A 172-amino-acid chain; its full sequence is uncharacterized protein (172 aa).

This is an uncharacterized protein from Saccharomyces cerevisiae (strain ATCC 204508 / S288c) (Baker's yeast).